The following is a 181-amino-acid chain: Mannose-specific lectin (181 aa).

The first 30 residues, 1–30 (MGRTTSSPKAMMRIATVAAILTILASTCMA), serve as a signal peptide directing secretion. The region spanning 31-140 (RNVLTNGEGL…DIWSTGTYRR (110 aa)) is the Bulb-type lectin domain. Positions 56, 58, 60, 64, 71, 72, 74, 88, 90, 92, 96, 103, 104, 107, 114, 120, 122, 124, 128, and 133 each coordinate alpha-D-mannopyranose. Cys59 and Cys83 are oxidised to a cystine.

In terms of assembly, homodimer.

Its subcellular location is the secreted. Its function is as follows. Mannose-specific lectin. Shows agglutinating activity towards rabbit erythrocytes. However, it does not show agglutinating activity towards human erythrocytes. Has insecticidal activity against the cotton leafworm S.littoralis and the peach potato aphid M.persicae. Also displays antiviral activity and therefore may contribute to defense against infections. The chain is Mannose-specific lectin from Allium sativum (Garlic).